Here is a 75-residue protein sequence, read N- to C-terminus: Exodeoxyribonuclease 7 small subunit (75 aa).

It belongs to the XseB family. Heterooligomer composed of large and small subunits.

It localises to the cytoplasm. The catalysed reaction is Exonucleolytic cleavage in either 5'- to 3'- or 3'- to 5'-direction to yield nucleoside 5'-phosphates.. Bidirectionally degrades single-stranded DNA into large acid-insoluble oligonucleotides, which are then degraded further into small acid-soluble oligonucleotides. The chain is Exodeoxyribonuclease 7 small subunit from Clostridium perfringens (strain ATCC 13124 / DSM 756 / JCM 1290 / NCIMB 6125 / NCTC 8237 / Type A).